The following is a 128-amino-acid chain: Sm-like protein LSM1B (128 aa).

Residues 10–85 (YLSTSLASYL…VVLIGELDTE (76 aa)) enclose the Sm domain.

Belongs to the snRNP Sm proteins family. As to quaternary structure, component of the heptameric LSM1-LSM7 complex that forms a seven-membered ring structure with a donut shape. The LSM subunits are arranged in the order LSM1, LSM2, LSM3, LSM6, LSM5, LSM7 and LSM4. LSM1B subunit interacts only with its two neighboring subunits, LSM2 and LSM4. In terms of tissue distribution, expressed in roots, leaves, stems, flowers and siliques.

The protein resides in the cytoplasm. It localises to the P-body. Component of the cytoplasmic LSM1-LSM7 complex which is involved in mRNA degradation by promoting decapping and leading to accurate 5'-3' mRNA decay. LSM1A and LSM1B are essential for the formation of the cytoplasmic LSM1-LSM7 complex which regulates developmental gene expression by the decapping of specific development-related transcripts. Required for P-body formation during heat stress. In Arabidopsis thaliana (Mouse-ear cress), this protein is Sm-like protein LSM1B.